A 334-amino-acid polypeptide reads, in one-letter code: Biotin synthase (334 aa).

The Radical SAM core domain maps to 41–260 (TRLETASLLS…IAVARIMMPR (220 aa)). Residues cysteine 56, cysteine 60, and cysteine 63 each contribute to the [4Fe-4S] cluster site. Residues cysteine 100, cysteine 131, cysteine 191, and arginine 264 each contribute to the [2Fe-2S] cluster site.

Belongs to the radical SAM superfamily. Biotin synthase family. Homodimer. [4Fe-4S] cluster is required as a cofactor. Requires [2Fe-2S] cluster as cofactor.

The catalysed reaction is (4R,5S)-dethiobiotin + (sulfur carrier)-SH + 2 reduced [2Fe-2S]-[ferredoxin] + 2 S-adenosyl-L-methionine = (sulfur carrier)-H + biotin + 2 5'-deoxyadenosine + 2 L-methionine + 2 oxidized [2Fe-2S]-[ferredoxin]. The protein operates within cofactor biosynthesis; biotin biosynthesis; biotin from 7,8-diaminononanoate: step 2/2. Functionally, catalyzes the conversion of dethiobiotin (DTB) to biotin by the insertion of a sulfur atom into dethiobiotin via a radical-based mechanism. The protein is Biotin synthase of Bradyrhizobium sp. (strain ORS 278).